Reading from the N-terminus, the 129-residue chain is MQVNHLLRQAVKQTTRAGRLGSRKPHKPLLPPLQLYRRILREHRNLPTMQRELGDQYVKNEFKLHKSTDNPLYIVGFLASWQDYLHMITRGEWEEGTLSTDLLEKMSPEQVTQLYELMKEAEQLKSGGE.

The N-terminal 21 residues, M1–G21, are a transit peptide targeting the mitochondrion.

The protein belongs to the complex I LYR family. SDHAF3 subfamily. Interacts with the iron-sulfur protein subunit within the SDH catalytic dimer.

Its subcellular location is the mitochondrion matrix. Functionally, plays an essential role in the assembly of succinate dehydrogenase (SDH), an enzyme complex (also referred to as respiratory complex II) that is a component of both the tricarboxylic acid (TCA) cycle and the mitochondrial electron transport chain, and which couples the oxidation of succinate to fumarate with the reduction of ubiquinone (coenzyme Q) to ubiquinol. Promotes maturation of the iron-sulfur protein subunit of the SDH catalytic dimer, protecting it from the deleterious effects of oxidants. May act together with SDHAF1. This Kluyveromyces lactis (strain ATCC 8585 / CBS 2359 / DSM 70799 / NBRC 1267 / NRRL Y-1140 / WM37) (Yeast) protein is Succinate dehydrogenase assembly factor 3, mitochondrial.